The primary structure comprises 1007 residues: Tolloid-like protein 1 (1007 aa).

Residues 1 to 25 form the signal peptide; the sequence is MNMPSWLIFLLTGWTFCGNFFACGG. The propeptide occupies 26–142; that stretch reads LDYDYPNYEN…GKSKKIRIPR (117 aa). Residues 115–139 are disordered; the sequence is SGQENTTANSQKVDNNQSGKSKKIR. The segment covering 116–133 has biased composition (polar residues); the sequence is GQENTTANSQKVDNNQSG. The 200-residue stretch at 143–342 folds into the Peptidase M12A domain; the sequence is AATSRTERIW…AQARKLYRCP (200 aa). Residue Asn-164 is glycosylated (N-linked (GlcNAc...) asparagine). Disulfide bonds link Cys-185/Cys-341, Cys-205/Cys-227, Cys-207/Cys-208, and Cys-344/Cys-370. His-235 serves as a coordination point for Zn(2+). Residue Glu-236 is part of the active site. The Zn(2+) site is built by His-239 and His-245. 2 CUB domains span residues 344-456 and 457-569; these read CGET…YEAI and CGGE…FLKE. N-linked (GlcNAc...) asparagine glycans are attached at residues Asn-354 and Asn-385. 15 cysteine pairs are disulfide-bonded: Cys-397/Cys-419, Cys-457/Cys-483, Cys-510/Cys-532, Cys-573/Cys-585, Cys-581/Cys-594, Cys-596/Cys-609, Cys-613/Cys-639, Cys-666/Cys-688, Cys-729/Cys-740, Cys-736/Cys-749, Cys-751/Cys-764, Cys-769/Cys-795, Cys-822/Cys-844, Cys-882/Cys-912, and Cys-939/Cys-961. In terms of domain architecture, EGF-like 1; calcium-binding spans 569 to 610; sequence EEDECARPDNGGCEQRCVNTLGSYKCSCDPGYELAPDKKSCE. The 113-residue stretch at 613–725 folds into the CUB 3 domain; it reads CGGLLTKLNG…KGFRAHFFSD (113 aa). Asn-621 carries N-linked (GlcNAc...) asparagine glycosylation. Positions 725-765 constitute an EGF-like 2; calcium-binding domain; that stretch reads DKDECSKDNGGCQHECINTIGSYVCQCRNGFVLHDNKHDCK. 2 CUB domains span residues 769–881 and 882–998; these read CEHR…HSTE and CGGR…YRSV.

The cofactor is Zn(2+).

It localises to the secreted. Functionally, protease which processes procollagen C-propeptides, such as chordin. Required for the embryonic development. Predominant protease, which in the development, influences dorsal-ventral patterning and skeletogenesis. This is Tolloid-like protein 1 (tll1) from Xenopus laevis (African clawed frog).